Here is a 331-residue protein sequence, read N- to C-terminus: Holliday junction branch migration complex subunit RuvB (331 aa).

Positions 1–178 are large ATPase domain (RuvB-L); that stretch reads MRNSIFEQEE…FGITLRLDFY (178 aa). Residues L17, R18, G59, K62, T63, T64, 125 to 127, R168, Y178, and R215 contribute to the ATP site; that span reads EDY. Residue T63 coordinates Mg(2+). Residues 179–249 form a small ATPAse domain (RuvB-S) region; it reads TVSELLQLLQ…FADLALNKME (71 aa). The head domain (RuvB-H) stretch occupies residues 252-331; that stretch reads QFGLDKLDYT…LSTINSARLP (80 aa). Positions 307 and 312 each coordinate DNA.

This sequence belongs to the RuvB family. In terms of assembly, homohexamer. Forms an RuvA(8)-RuvB(12)-Holliday junction (HJ) complex. HJ DNA is sandwiched between 2 RuvA tetramers; dsDNA enters through RuvA and exits via RuvB. An RuvB hexamer assembles on each DNA strand where it exits the tetramer. Each RuvB hexamer is contacted by two RuvA subunits (via domain III) on 2 adjacent RuvB subunits; this complex drives branch migration. In the full resolvosome a probable DNA-RuvA(4)-RuvB(12)-RuvC(2) complex forms which resolves the HJ.

The protein localises to the cytoplasm. It carries out the reaction ATP + H2O = ADP + phosphate + H(+). Its function is as follows. The RuvA-RuvB-RuvC complex processes Holliday junction (HJ) DNA during genetic recombination and DNA repair, while the RuvA-RuvB complex plays an important role in the rescue of blocked DNA replication forks via replication fork reversal (RFR). RuvA specifically binds to HJ cruciform DNA, conferring on it an open structure. The RuvB hexamer acts as an ATP-dependent pump, pulling dsDNA into and through the RuvAB complex. RuvB forms 2 homohexamers on either side of HJ DNA bound by 1 or 2 RuvA tetramers; 4 subunits per hexamer contact DNA at a time. Coordinated motions by a converter formed by DNA-disengaged RuvB subunits stimulates ATP hydrolysis and nucleotide exchange. Immobilization of the converter enables RuvB to convert the ATP-contained energy into a lever motion, pulling 2 nucleotides of DNA out of the RuvA tetramer per ATP hydrolyzed, thus driving DNA branch migration. The RuvB motors rotate together with the DNA substrate, which together with the progressing nucleotide cycle form the mechanistic basis for DNA recombination by continuous HJ branch migration. Branch migration allows RuvC to scan DNA until it finds its consensus sequence, where it cleaves and resolves cruciform DNA. The chain is Holliday junction branch migration complex subunit RuvB from Neorickettsia sennetsu (strain ATCC VR-367 / Miyayama) (Ehrlichia sennetsu).